A 395-amino-acid chain; its full sequence is ATP phosphoribosyltransferase regulatory subunit (395 aa).

It belongs to the class-II aminoacyl-tRNA synthetase family. HisZ subfamily. As to quaternary structure, heteromultimer composed of HisG and HisZ subunits.

The protein localises to the cytoplasm. Its pathway is amino-acid biosynthesis; L-histidine biosynthesis; L-histidine from 5-phospho-alpha-D-ribose 1-diphosphate: step 1/9. In terms of biological role, required for the first step of histidine biosynthesis. May allow the feedback regulation of ATP phosphoribosyltransferase activity by histidine. The polypeptide is ATP phosphoribosyltransferase regulatory subunit (Pseudomonas syringae pv. tomato (strain ATCC BAA-871 / DC3000)).